Here is a 254-residue protein sequence, read N- to C-terminus: Receptor expression-enhancing protein 2 (254 aa).

A run of 2 helical transmembrane segments spans residues 1–21 and 35–55; these read MVSW…YPAY and YVKW…ETLT. Residue serine 152 is modified to Phosphoserine. The tract at residues 194–254 is disordered; sequence LSLRSSTSQP…KKSSGGGDSA (61 aa). The segment covering 205 to 219 has biased composition (basic and acidic residues); it reads PRTETSEDDLGDKAP.

The protein belongs to the DP1 family. Interacts with odorant receptor proteins.

The protein resides in the membrane. Required for endoplasmic reticulum (ER) network formation, shaping and remodeling. May enhance the cell surface expression of odorant receptors. The chain is Receptor expression-enhancing protein 2 (Reep2) from Mus musculus (Mouse).